A 491-amino-acid polypeptide reads, in one-letter code: Adenylosuccinate synthetase, chloroplastic (491 aa).

Residues glycine 78–lysine 84 and glycine 106–threonine 108 contribute to the GTP site. The active-site Proton acceptor is the aspartate 79. Mg(2+) contacts are provided by aspartate 79 and glycine 106. IMP contacts are provided by residues aspartate 79–lysine 82, asparagine 104–histidine 107, threonine 196, arginine 210, glutamine 290, threonine 305, and arginine 369. Catalysis depends on histidine 107, which acts as the Proton donor. Residue threonine 365 to arginine 371 participates in substrate binding. Residues arginine 371, lysine 397–aspartate 399, and glycine 480–glycine 482 contribute to the GTP site.

This sequence belongs to the adenylosuccinate synthetase family. Homodimer. It depends on Mg(2+) as a cofactor.

The protein resides in the plastid. The protein localises to the chloroplast. The catalysed reaction is IMP + L-aspartate + GTP = N(6)-(1,2-dicarboxyethyl)-AMP + GDP + phosphate + 2 H(+). It participates in purine metabolism; AMP biosynthesis via de novo pathway; AMP from IMP: step 1/2. In terms of biological role, plays an important role in the de novo pathway and in the salvage pathway of purine nucleotide biosynthesis. Catalyzes the first committed step in the biosynthesis of AMP from IMP. The sequence is that of Adenylosuccinate synthetase, chloroplastic from Populus trichocarpa (Western balsam poplar).